Reading from the N-terminus, the 112-residue chain is Dolichyl-diphosphooligosaccharide--protein glycosyltransferase subunit DAD1 (112 aa).

Over 1 to 27 (MVELSSVISKFYNDYVQNTPKKLKLVD) the chain is Cytoplasmic. A helical transmembrane segment spans residues 28–48 (IYLGYILLTGIIQFVYCCLVG). Topologically, residues 49-51 (TFP) are lumenal. A helical membrane pass occupies residues 52 to 72 (FNSFLSGFISTVSCFVLAVCL). At 73-91 (RLQANPQNKSVFAGISPER) the chain is on the cytoplasmic side. The chain crosses the membrane as a helical span at residues 92–112 (GFADFIFAHVILHLVVMNFIG).

This sequence belongs to the DAD/OST2 family. In terms of assembly, component of the oligosaccharyltransferase (OST) complex.

It localises to the endoplasmic reticulum membrane. The protein operates within protein modification; protein glycosylation. Subunit of the oligosaccharyl transferase (OST) complex that catalyzes the initial transfer of a defined glycan (Glc(3)Man(9)GlcNAc(2) in eukaryotes) from the lipid carrier dolichol-pyrophosphate to an asparagine residue within an Asn-X-Ser/Thr consensus motif in nascent polypeptide chains, the first step in protein N-glycosylation. N-glycosylation occurs cotranslationally and the complex associates with the Sec61 complex at the channel-forming translocon complex that mediates protein translocation across the endoplasmic reticulum (ER). All subunits are required for a maximal enzyme activity. Probably as part of the N-glycosylation pathway, plays a role in the regulation of tissue growth and apoptosis. The chain is Dolichyl-diphosphooligosaccharide--protein glycosyltransferase subunit DAD1 from Drosophila melanogaster (Fruit fly).